A 975-amino-acid polypeptide reads, in one-letter code: Probable ATP-dependent RNA helicase CG8611 (975 aa).

Over residues 1 to 24 (MVENISLNVTVKSSARKNQQQSPA) the composition is skewed to polar residues. Disordered regions lie at residues 1 to 38 (MVEN…QDFD), 50 to 104 (AIVV…DDLM), and 127 to 295 (TTKP…FRTK). The segment covering 64–94 (PTNSSVPNTTKSPTPSVSSSKSAISTLSASP) has biased composition (low complexity). Phosphoserine is present on residues S75 and S99. Positions 190 to 203 (QLEEERRQKRREEG) are enriched in basic and acidic residues. Phosphoserine occurs at positions 210, 220, and 224. Over residues 242–261 (IEDSGESGEESATSDEEPDE) the composition is skewed to acidic residues. A compositionally biased stretch (basic and acidic residues) spans 269-285 (QEKEPKQTAKKPPKAEE). The short motif at 327 to 356 (SKISTLGLHPHAVKNLEDLLSIRELTSVQQ) is the Q motif element. One can recognise a Helicase ATP-binding domain in the interval 359–548 (IPEVLQGKDV…GLTLKNPLYI (190 aa)). Residue 372-379 (SQTGSGKT) coordinates ATP. The short motif at 485–488 (DEAD) is the DEAD box element. The region spanning 616–789 (LLAKEVDASP…DMYAYLQTLL (174 aa)) is the Helicase C-terminal domain. The residue at position 667 (S667) is a Phosphoserine. Disordered stretches follow at residues 915-942 (LQQR…VGRS) and 955-975 (NMSE…RKQA).

It belongs to the DEAD box helicase family. DDX31/DBP7 subfamily.

It catalyses the reaction ATP + H2O = ADP + phosphate + H(+). Probable ATP-dependent RNA helicase. In Drosophila melanogaster (Fruit fly), this protein is Probable ATP-dependent RNA helicase CG8611.